Consider the following 372-residue polypeptide: Actin-related protein 2/3 complex subunit 1B (372 aa).

WD repeat units follow at residues 6–45, 50–89, 94–135, 140–179, 242–280, and 324–367; these read FLVE…WTKV, EHNG…WKPT, RINR…WVCK, PIRS…VEER, SETL…GMLS, and LHKN…SALK.

The protein belongs to the WD repeat ARPC1 family. As to quaternary structure, component of the Arp2/3 complex composed of ACTR2/ARP2, ACTR3/ARP3, ARPC1B/p41-ARC, ARPC2/p34-ARC, ARPC3/p21-ARC, ARPC4/p20-ARC and ARPC5/p16-ARC.

It is found in the cytoplasm. The protein resides in the cytoskeleton. Its subcellular location is the nucleus. Its function is as follows. Component of the Arp2/3 complex, a multiprotein complex that mediates actin polymerization upon stimulation by nucleation-promoting factor (NPF). The Arp2/3 complex mediates the formation of branched actin networks in the cytoplasm, providing the force for cell motility. In addition to its role in the cytoplasmic cytoskeleton, the Arp2/3 complex also promotes actin polymerization in the nucleus, thereby regulating gene transcription and repair of damaged DNA. The Arp2/3 complex promotes homologous recombination (HR) repair in response to DNA damage by promoting nuclear actin polymerization, leading to drive motility of double-strand breaks (DSBs). The protein is Actin-related protein 2/3 complex subunit 1B of Homo sapiens (Human).